A 210-amino-acid chain; its full sequence is Glutathione S-transferase 3 (210 aa).

One can recognise a GST N-terminal domain in the interval 1–80; it reads MDFYYLPLSA…YLVEKYGKQN (80 aa). Glutathione contacts are provided by residues S9, 50–52, and 64–66; these read HTI and ESR. The GST C-terminal domain occupies 87–208; it reads CPKKRALINQ…AGCLEMKKYF (122 aa).

The protein belongs to the GST superfamily. Theta family. In terms of assembly, homodimer.

The catalysed reaction is RX + glutathione = an S-substituted glutathione + a halide anion + H(+). Functionally, conjugation of reduced glutathione to a wide number of exogenous and endogenous hydrophobic electrophiles. The protein is Glutathione S-transferase 3 (Gst3) of Musca domestica (House fly).